Reading from the N-terminus, the 453-residue chain is 4,4'-diapolycopene-4,4'-dial dehydrogenase (453 aa).

A compositionally biased stretch (basic and acidic residues) spans 1-20 (MPDNDSHSLKSLPERQREDL). The segment at 1-23 (MPDNDSHSLKSLPERQREDLFSA) is disordered. Residues Glu215 and Cys249 contribute to the active site.

Belongs to the aldehyde dehydrogenase family.

The catalysed reaction is all-trans-4,4'-diapolycopene-4,4'-dial + 2 A + 2 H2O = all-trans-4,4'-diapolycopene-4,4'-dioate + 2 AH2 + 2 H(+). It functions in the pathway carotenoid biosynthesis. Its function is as follows. Involved in the biosynthesis of the major C30 carotenoid 4,4'-diapolycopene-4,4'-dioic acid, which protects B.firmus from peroxidative reactions. Catalyzes the oxidation of 4,4'-diapolycopene-4,4'-dial to yield 4,4'-diapolycopene-4,4'-dioic aci. The protein is 4,4'-diapolycopene-4,4'-dial dehydrogenase of Cytobacillus firmus (Bacillus firmus).